The chain runs to 280 residues: Protoheme IX farnesyltransferase (280 aa).

9 consecutive transmembrane segments (helical) span residues 2–21, 30–50, 83–103, 105–125, 131–151, 160–180, 206–226, 229–249, and 260–280; these read VVAT…RAGL, AAVP…VVSG, LALW…LVGV, ATTG…YTPL, LSLP…WTSV, FLLF…ISLF, IVGY…LGVA, VYLG…VYGL, and QVFF…MIGA.

This sequence belongs to the UbiA prenyltransferase family. Protoheme IX farnesyltransferase subfamily.

The protein resides in the cell inner membrane. The catalysed reaction is heme b + (2E,6E)-farnesyl diphosphate + H2O = Fe(II)-heme o + diphosphate. Its pathway is porphyrin-containing compound metabolism; heme O biosynthesis; heme O from protoheme: step 1/1. In terms of biological role, converts heme B (protoheme IX) to heme O by substitution of the vinyl group on carbon 2 of heme B porphyrin ring with a hydroxyethyl farnesyl side group. This Sorangium cellulosum (strain So ce56) (Polyangium cellulosum (strain So ce56)) protein is Protoheme IX farnesyltransferase.